A 573-amino-acid chain; its full sequence is MTNSKGRSITDKTSGGPSNGGGFVDWTLRLNTIQSDKFLNLLLSMVPVIYQKNQEDRHKKANGIWQDGLSTAVQTFSNRSEQHMEYHSFSEQSFHANNGHASSSCSQKYDDYANYNYCDGRETSETTAMLQDEDVSSDGDEDAIVEVTPKLPKESSGIMALQILVPFLLAGFGTVSAGMVLDIVQHWEVFRKVTEVFILVPALLGLKGNLEMTLASRLSTAVNIGKMDSPIEKWNLIIGNLALKQVQATVVGFLAAVAAIILGWIPEGKYYLDHSILLCSSSVATAFIASLLQGIIMVGVIVGSKKTGINPDNVATPIAASFGDLITLAILAWISQGLYSCLETYYYISPLVGVFFLALTPIWIIIAAKHPATRTVLHSGWEPVITAMVISSIGGLILDTTVSDPNLVGIVVYTPVINGIGGNLVAIQASRISTYLHLHSIPGELPDEPKGCYYPFRTFFGPGVNNKSAQVLLLLVIPGHLIFLYTIHLMKSGHTSLTIIFIVVYLFAAVLQVFTLLWIADWMVHHFWRKGKDPDSFSIPYLTALGDLLGTALLALSFHFLWLIGDRDGDVGD.

Residues 1-162 (MTNSKGRSIT…KESSGIMALQ (162 aa)) are Extracellular-facing. Residues Ser-136 and Ser-137 each carry the phosphoserine modification. Residues 163–183 (ILVPFLLAGFGTVSAGMVLDI) traverse the membrane as a helical segment. Over 184–195 (VQHWEVFRKVTE) the chain is Cytoplasmic. The helical transmembrane segment at 196–216 (VFILVPALLGLKGNLEMTLAS) threads the bilayer. Residues 217–245 (RLSTAVNIGKMDSPIEKWNLIIGNLALKQ) lie on the Extracellular side of the membrane. Residues 246-266 (VQATVVGFLAAVAAIILGWIP) traverse the membrane as a helical segment. Residues 267 to 282 (EGKYYLDHSILLCSSS) lie on the Cytoplasmic side of the membrane. Residues 283–303 (VATAFIASLLQGIIMVGVIVG) traverse the membrane as a helical segment. Residues 304–313 (SKKTGINPDN) lie on the Extracellular side of the membrane. Residues 314–334 (VATPIAASFGDLITLAILAWI) form a helical membrane-spanning segment. Over 335-347 (SQGLYSCLETYYY) the chain is Cytoplasmic. Residues 348–368 (ISPLVGVFFLALTPIWIIIAA) form a helical membrane-spanning segment. Topologically, residues 369 to 376 (KHPATRTV) are extracellular. The chain crosses the membrane as a helical span at residues 377–397 (LHSGWEPVITAMVISSIGGLI). The Cytoplasmic segment spans residues 398 to 406 (LDTTVSDPN). A helical transmembrane segment spans residues 407–427 (LVGIVVYTPVINGIGGNLVAI). Residues 428-469 (QASRISTYLHLHSIPGELPDEPKGCYYPFRTFFGPGVNNKSA) lie on the Extracellular side of the membrane. Residues 470–490 (QVLLLLVIPGHLIFLYTIHLM) traverse the membrane as a helical segment. Over 491–498 (KSGHTSLT) the chain is Cytoplasmic. The helical transmembrane segment at 499–519 (IIFIVVYLFAAVLQVFTLLWI) threads the bilayer. Residues 520 to 543 (ADWMVHHFWRKGKDPDSFSIPYLT) lie on the Extracellular side of the membrane. Residues 544-564 (ALGDLLGTALLALSFHFLWLI) form a helical membrane-spanning segment. Residues 565–573 (GDRDGDVGD) lie on the Cytoplasmic side of the membrane.

Belongs to the SLC41A transporter family.

It localises to the cell membrane. It carries out the reaction Mg(2+)(in) = Mg(2+)(out). The enzyme catalyses Mn(2+)(in) = Mn(2+)(out). It catalyses the reaction Co(2+)(in) = Co(2+)(out). The catalysed reaction is Ni(2+)(in) = Ni(2+)(out). It carries out the reaction Fe(2+)(in) = Fe(2+)(out). Acts as a plasma-membrane magnesium transporter. Can also mediate the transport of other divalent metal cations in an order of Ba(2+) &gt; Ni(2+) &gt; Co(2+) &gt; Fe(2+) &gt; Mn(2+). This Macaca fascicularis (Crab-eating macaque) protein is Solute carrier family 41 member 2 (SLC41A2).